A 678-amino-acid polypeptide reads, in one-letter code: uncharacterized protein (678 aa).

Disordered regions lie at residues 123 to 156 (TPLS…TDSV) and 381 to 417 (TETT…TEHS).

The protein localises to the cytoplasm. This is an uncharacterized protein from Schizosaccharomyces pombe (strain 972 / ATCC 24843) (Fission yeast).